Here is a 496-residue protein sequence, read N- to C-terminus: Cyclin-L1 (496 aa).

Cyclin-like regions lie at residues 68 to 170 and 183 to 267; these read ELIQ…RILK and KIIV…TTLR. The disordered stretch occupies residues 301–496; sequence NPDGTPAILS…SHSGHGRHRR (196 aa). Over residues 322-347 the composition is skewed to basic and acidic residues; it reads SPRDVKTEEKSPNFAKVKREMDDKQS. Composition is skewed to basic residues over residues 358–392, 412–426, 434–446, and 456–468; these read ENKR…RRSR, RRHH…KLKH, RHAH…HSPS, and KKHR…HRER. An RS region spans residues 363-406; that stretch reads RSVSRSRSRTKSRSRSHSPRRHYNNRRRSRSGTYSSRSRSRSRS. Over residues 469-478 the composition is skewed to basic and acidic residues; the sequence is RERSRSFERS. The span at 479–496 shows a compositional bias: basic residues; the sequence is HKNKHHGSSHSGHGRHRR.

Belongs to the cyclin family. Cyclin L subfamily.

Its subcellular location is the nucleus speckle. The protein localises to the nucleus. The protein resides in the nucleoplasm. Involved in pre-mRNA splicing. This chain is Cyclin-L1 (ccnl1), found in Xenopus laevis (African clawed frog).